Here is a 525-residue protein sequence, read N- to C-terminus: Glutamate--cysteine ligase (525 aa).

This sequence belongs to the glutamate--cysteine ligase type 1 family. Type 1 subfamily.

It carries out the reaction L-cysteine + L-glutamate + ATP = gamma-L-glutamyl-L-cysteine + ADP + phosphate + H(+). It functions in the pathway sulfur metabolism; glutathione biosynthesis; glutathione from L-cysteine and L-glutamate: step 1/2. The sequence is that of Glutamate--cysteine ligase from Pseudomonas putida (strain ATCC 47054 / DSM 6125 / CFBP 8728 / NCIMB 11950 / KT2440).